Reading from the N-terminus, the 1434-residue chain is Gag-Pol polyprotein (1434 aa).

G2 carries the N-myristoyl glycine; by host lipid modification. An interaction with Gp41 region spans residues 7 to 31; that stretch reads VLSGGKLDAWEKIRLRPGGKKKYRL. An interaction with host CALM1 region spans residues 8–43; that stretch reads LSGGKLDAWEKIRLRPGGKKKYRLKHIVWASRELKR. The interaction with host AP3D1 stretch occupies residues 12 to 19; that stretch reads KLDAWEKI. Positions 14-33 are interaction with membrane phosphatidylinositol 4,5-bisphosphate and RNA; the sequence is DAWEKIRLRPGGKKKYRLKH. The Nuclear export signal motif lies at 16–22; sequence WEKIRLR. The Nuclear localization signal motif lies at 26-32; that stretch reads KKKYRLK. Positions 73 to 77 are interaction with membrane phosphatidylinositol 4,5-bisphosphate; that stretch reads EELKS. The segment covering 103–112 has biased composition (basic and acidic residues); sequence KLQEEQDKHQ. The disordered stretch occupies residues 103 to 124; that stretch reads KLQEEQDKHQQKTQQATADKGV. Phosphotyrosine; by host is present on Y132. The interval 189 to 227 is interaction with human PPIA/CYPA and NUP153; sequence NTVGGHQAAMQMLKDTINEEAAEWDRLHPVHAGPIPPGQ. A dimerization/Multimerization of capsid protein p24 region spans residues 277 to 363; the sequence is YSPVSILDIK…GGPSHKARIL (87 aa). 2 consecutive CCHC-type zinc fingers follow at residues 389–406 and 410–427; these read VKCF…NCRA and RGCW…DCTE. The segment at 443–483 is disordered; the sequence is EARKFSSEQTRANSPASRELRVRGGDSSLPEAGAERQGTGS. Polar residues predominate over residues 449-458; it reads SEQTRANSPA. The segment at 488-492 is dimerization of protease; the sequence is PQITL. The region spanning 507–576 is the Peptidase A2 domain; sequence REALLDTGAD…TPVNIIGRNM (70 aa). The active-site For protease activity; shared with dimeric partner is D512. Dimerization of protease regions lie at residues 536 to 542 and 575 to 587; these read GIGGFIK and NMLT…LNFP. The 191-residue stretch at 630 to 820 folds into the Reverse transcriptase domain; the sequence is EGKISKIGPE…PPFLWMGYEL (191 aa). 3 residues coordinate Mg(2+): D696, D771, and D772. The RT 'primer grip' stretch occupies residues 813 to 821; it reads FLWMGYELH. Positions 984–1000 match the Tryptophan repeat motif motif; that stretch reads WEIWWTEYWQATWIPEW. The RNase H type-1 domain maps to 1020-1143; that stretch reads IIGAETFYVD…VDKLVSTGIR (124 aa). Mg(2+) contacts are provided by D1029, E1064, D1084, and D1135. The Integrase-type zinc-finger motif lies at 1149-1190; that stretch reads DGIDKAQEEHEKYHSNWRAMASDFNLPPVVAKEIVASCDKCQ. The Zn(2+) site is built by H1158, H1162, C1186, and C1189. The Integrase catalytic domain maps to 1200-1350; that stretch reads VDCSPGIWQL…SAGERIIDII (151 aa). Mg(2+) contacts are provided by D1210, D1262, and E1298. The segment at residues 1369–1416 is a DNA-binding region (integrase-type); the sequence is FRVYFRDSRDPVWKGPAKLLWKGEGAVVIQDNNEIKVIPRRKAKIIRD.

Homotrimer; further assembles as hexamers of trimers. Interacts with gp41 (via C-terminus). Interacts with host CALM1; this interaction induces a conformational change in the Matrix protein, triggering exposure of the myristate group. Interacts with host AP3D1; this interaction allows the polyprotein trafficking to multivesicular bodies during virus assembly. Part of the pre-integration complex (PIC) which is composed of viral genome, matrix protein, Vpr and integrase. As to quaternary structure, homodimer; the homodimer further multimerizes as homohexamers or homopentamers. Interacts with human PPIA/CYPA; This interaction stabilizes the capsid. Interacts with human NUP153. Interacts with host PDZD8; this interaction stabilizes the capsid. Interacts with monkey TRIM5; this interaction destabilizes the capsid. In terms of assembly, homodimer, whose active site consists of two apposed aspartic acid residues. Heterodimer of p66 RT and p51 RT (RT p66/p51). Heterodimerization of RT is essential for DNA polymerase activity. The overall folding of the subdomains is similar in p66 RT and p51 RT but the spatial arrangements of the subdomains are dramatically different. As to quaternary structure, homotetramer; may further associate as a homohexadecamer. Part of the pre-integration complex (PIC) which is composed of viral genome, matrix protein, Vpr and integrase. Interacts with human SMARCB1/INI1 and human PSIP1/LEDGF isoform 1. Interacts with human KPNA3; this interaction might play a role in nuclear import of the pre-integration complex. Interacts with human NUP153; this interaction might play a role in nuclear import of the pre-integration complex. Mg(2+) serves as cofactor. In terms of processing, specific enzymatic cleavages by the viral protease yield mature proteins. The protease is released by autocatalytic cleavage. The polyprotein is cleaved during and after budding, this process is termed maturation. Proteolytic cleavage of p66 RT removes the RNase H domain to yield the p51 RT subunit. Nucleocapsid protein p7 might be further cleaved after virus entry. Tyrosine phosphorylated presumably in the virion by a host kinase. Phosphorylation is apparently not a major regulator of membrane association. Post-translationally, phosphorylated possibly by host MAPK1; this phosphorylation is necessary for Pin1-mediated virion uncoating. In terms of processing, methylated by host PRMT6, impairing its function by reducing RNA annealing and the initiation of reverse transcription.

The protein localises to the host cell membrane. It localises to the host endosome. The protein resides in the host multivesicular body. It is found in the virion membrane. Its subcellular location is the host nucleus. The protein localises to the host cytoplasm. It localises to the virion. It carries out the reaction Specific for a P1 residue that is hydrophobic, and P1' variable, but often Pro.. The enzyme catalyses Endohydrolysis of RNA in RNA/DNA hybrids. Three different cleavage modes: 1. sequence-specific internal cleavage of RNA. Human immunodeficiency virus type 1 and Moloney murine leukemia virus enzymes prefer to cleave the RNA strand one nucleotide away from the RNA-DNA junction. 2. RNA 5'-end directed cleavage 13-19 nucleotides from the RNA end. 3. DNA 3'-end directed cleavage 15-20 nucleotides away from the primer terminus.. The catalysed reaction is 3'-end directed exonucleolytic cleavage of viral RNA-DNA hybrid.. It catalyses the reaction DNA(n) + a 2'-deoxyribonucleoside 5'-triphosphate = DNA(n+1) + diphosphate. Protease: The viral protease is inhibited by many synthetic protease inhibitors (PIs), such as amprenavir, atazanavir, indinavir, loprinavir, nelfinavir, ritonavir and saquinavir. Use of protease inhibitors in tritherapy regimens permit more ambitious therapeutic strategies. Reverse transcriptase/ribonuclease H: RT can be inhibited either by nucleoside RT inhibitors (NRTIs) or by non nucleoside RT inhibitors (NNRTIs). NRTIs act as chain terminators, whereas NNRTIs inhibit DNA polymerization by binding a small hydrophobic pocket near the RT active site and inducing an allosteric change in this region. Classical NRTIs are abacavir, adefovir (PMEA), didanosine (ddI), lamivudine (3TC), stavudine (d4T), tenofovir (PMPA), zalcitabine (ddC), and zidovudine (AZT). Classical NNRTIs are atevirdine (BHAP U-87201E), delavirdine, efavirenz (DMP-266), emivirine (I-EBU), and nevirapine (BI-RG-587). The tritherapies used as a basic effective treatment of AIDS associate two NRTIs and one NNRTI. Its function is as follows. Mediates, with Gag polyprotein, the essential events in virion assembly, including binding the plasma membrane, making the protein-protein interactions necessary to create spherical particles, recruiting the viral Env proteins, and packaging the genomic RNA via direct interactions with the RNA packaging sequence (Psi). Gag-Pol polyprotein may regulate its own translation, by the binding genomic RNA in the 5'-UTR. At low concentration, the polyprotein would promote translation, whereas at high concentration, the polyprotein would encapsidate genomic RNA and then shut off translation. In terms of biological role, targets the polyprotein to the plasma membrane via a multipartite membrane-binding signal, that includes its myristoylated N-terminus. Matrix protein is part of the pre-integration complex. Implicated in the release from host cell mediated by Vpu. Binds to RNA. Forms the conical core that encapsulates the genomic RNA-nucleocapsid complex in the virion. Most core are conical, with only 7% tubular. The core is constituted by capsid protein hexamer subunits. The core is disassembled soon after virion entry. Host restriction factors such as TRIM5-alpha or TRIMCyp bind retroviral capsids and cause premature capsid disassembly, leading to blocks in reverse transcription. Capsid restriction by TRIM5 is one of the factors which restricts HIV-1 to the human species. Host PIN1 apparently facilitates the virion uncoating. On the other hand, interactions with PDZD8 or CYPA stabilize the capsid. Functionally, encapsulates and protects viral dimeric unspliced genomic RNA (gRNA). Binds these RNAs through its zinc fingers. Acts as a nucleic acid chaperone which is involved in rearangement of nucleic acid secondary structure during gRNA retrotranscription. Also facilitates template switch leading to recombination. As part of the polyprotein, participates in gRNA dimerization, packaging, tRNA incorporation and virion assembly. Its function is as follows. Aspartyl protease that mediates proteolytic cleavages of Gag and Gag-Pol polyproteins during or shortly after the release of the virion from the plasma membrane. Cleavages take place as an ordered, step-wise cascade to yield mature proteins. This process is called maturation. Displays maximal activity during the budding process just prior to particle release from the cell. Also cleaves Nef and Vif, probably concomitantly with viral structural proteins on maturation of virus particles. Hydrolyzes host EIF4GI and PABP1 in order to shut off the capped cellular mRNA translation. The resulting inhibition of cellular protein synthesis serves to ensure maximal viral gene expression and to evade host immune response. Also mediates cleavage of host YTHDF3. Mediates cleavage of host CARD8, thereby activating the CARD8 inflammasome, leading to the clearance of latent HIV-1 in patient CD4(+) T-cells after viral reactivation; in contrast, HIV-1 can evade CARD8-sensing when its protease remains inactive in infected cells prior to viral budding. In terms of biological role, multifunctional enzyme that converts the viral RNA genome into dsDNA in the cytoplasm, shortly after virus entry into the cell. This enzyme displays a DNA polymerase activity that can copy either DNA or RNA templates, and a ribonuclease H (RNase H) activity that cleaves the RNA strand of RNA-DNA heteroduplexes in a partially processive 3' to 5' endonucleasic mode. Conversion of viral genomic RNA into dsDNA requires many steps. A tRNA(3)-Lys binds to the primer-binding site (PBS) situated at the 5'-end of the viral RNA. RT uses the 3' end of the tRNA primer to perform a short round of RNA-dependent minus-strand DNA synthesis. The reading proceeds through the U5 region and ends after the repeated (R) region which is present at both ends of viral RNA. The portion of the RNA-DNA heteroduplex is digested by the RNase H, resulting in a ssDNA product attached to the tRNA primer. This ssDNA/tRNA hybridizes with the identical R region situated at the 3' end of viral RNA. This template exchange, known as minus-strand DNA strong stop transfer, can be either intra- or intermolecular. RT uses the 3' end of this newly synthesized short ssDNA to perform the RNA-dependent minus-strand DNA synthesis of the whole template. RNase H digests the RNA template except for two polypurine tracts (PPTs) situated at the 5'-end and near the center of the genome. It is not clear if both polymerase and RNase H activities are simultaneous. RNase H probably can proceed both in a polymerase-dependent (RNA cut into small fragments by the same RT performing DNA synthesis) and a polymerase-independent mode (cleavage of remaining RNA fragments by free RTs). Secondly, RT performs DNA-directed plus-strand DNA synthesis using the PPTs that have not been removed by RNase H as primers. PPTs and tRNA primers are then removed by RNase H. The 3' and 5' ssDNA PBS regions hybridize to form a circular dsDNA intermediate. Strand displacement synthesis by RT to the PBS and PPT ends produces a blunt ended, linear dsDNA copy of the viral genome that includes long terminal repeats (LTRs) at both ends. Catalyzes viral DNA integration into the host chromosome, by performing a series of DNA cutting and joining reactions. This enzyme activity takes place after virion entry into a cell and reverse transcription of the RNA genome in dsDNA. The first step in the integration process is 3' processing. This step requires a complex comprising the viral genome, matrix protein, Vpr and integrase. This complex is called the pre-integration complex (PIC). The integrase protein removes 2 nucleotides from each 3' end of the viral DNA, leaving recessed CA OH's at the 3' ends. In the second step, the PIC enters cell nucleus. This process is mediated through integrase and Vpr proteins, and allows the virus to infect a non dividing cell. This ability to enter the nucleus is specific of lentiviruses, other retroviruses cannot and rely on cell division to access cell chromosomes. In the third step, termed strand transfer, the integrase protein joins the previously processed 3' ends to the 5' ends of strands of target cellular DNA at the site of integration. The 5'-ends are produced by integrase-catalyzed staggered cuts, 5 bp apart. A Y-shaped, gapped, recombination intermediate results, with the 5'-ends of the viral DNA strands and the 3' ends of target DNA strands remaining unjoined, flanking a gap of 5 bp. The last step is viral DNA integration into host chromosome. This involves host DNA repair synthesis in which the 5 bp gaps between the unjoined strands are filled in and then ligated. Since this process occurs at both cuts flanking the HIV genome, a 5 bp duplication of host DNA is produced at the ends of HIV-1 integration. Alternatively, Integrase may catalyze the excision of viral DNA just after strand transfer, this is termed disintegration. The chain is Gag-Pol polyprotein (gag-pol) from Homo sapiens (Human).